The sequence spans 473 residues: 3-isopropylmalate dehydratase large subunit (473 aa).

The tract at residues 289 to 319 (TVTWGTTPGQTAGITEPIPDPDDLPEEDRDT) is disordered. Residues 291 to 301 (TWGTTPGQTAG) show a composition bias toward polar residues. Residues 307-317 (PDPDDLPEEDR) are compositionally biased toward acidic residues. Residues Cys-348, Cys-408, and Cys-411 each contribute to the [4Fe-4S] cluster site.

The protein belongs to the aconitase/IPM isomerase family. LeuC type 1 subfamily. As to quaternary structure, heterodimer of LeuC and LeuD. [4Fe-4S] cluster is required as a cofactor.

The catalysed reaction is (2R,3S)-3-isopropylmalate = (2S)-2-isopropylmalate. It participates in amino-acid biosynthesis; L-leucine biosynthesis; L-leucine from 3-methyl-2-oxobutanoate: step 2/4. Catalyzes the isomerization between 2-isopropylmalate and 3-isopropylmalate, via the formation of 2-isopropylmaleate. This Halorubrum lacusprofundi (strain ATCC 49239 / DSM 5036 / JCM 8891 / ACAM 34) protein is 3-isopropylmalate dehydratase large subunit.